The sequence spans 296 residues: Nitrogenase iron protein (296 aa).

10–17 (GKGGIGKS) serves as a coordination point for ATP. Cys98 lines the [4Fe-4S] cluster pocket. Position 101 is an ADP-ribosylarginine; by dinitrogenase reductase ADP-ribosyltransferase (Arg101). A [4Fe-4S] cluster-binding site is contributed by Cys133.

This sequence belongs to the NifH/BchL/ChlL family. Homodimer. Requires [4Fe-4S] cluster as cofactor. Post-translationally, the reversible ADP-ribosylation of Arg-101 inactivates the nitrogenase reductase and regulates nitrogenase activity.

The enzyme catalyses N2 + 8 reduced [2Fe-2S]-[ferredoxin] + 16 ATP + 16 H2O = H2 + 8 oxidized [2Fe-2S]-[ferredoxin] + 2 NH4(+) + 16 ADP + 16 phosphate + 6 H(+). The key enzymatic reactions in nitrogen fixation are catalyzed by the nitrogenase complex, which has 2 components: the iron protein and the molybdenum-iron protein. The protein is Nitrogenase iron protein of Magnetococcus marinus (strain ATCC BAA-1437 / JCM 17883 / MC-1).